A 127-amino-acid chain; its full sequence is uncharacterized protein (127 aa).

This is an uncharacterized protein from Acidianus two-tailed virus (ATV).